The primary structure comprises 321 residues: MSFVTEIKTFAALGSGVIGSGWIARALAHGLDVVAWDPAPGAEAALRARVANAWPALRKQGLAPGAAQERLRFVASIEECVGDADFIQESAPERLDLKLDLHARISAAARPDVLIGSSTSGLLPSEFYAEASHPERCLVGHPFNPVYLLPLVEVVGGERTAAEAVRAAMRVYESLGMRPLHVRKEVPGFIADRLLEALWREALHLVNDGVATTGEIDDAIRFGAGLRWSFMGTFLTYTLAGGNAGMRHFMAQFGPALQLPWTYLPAPELTEALIDRVVEGTAEQQGARSIAELERYRDDCLLAVLGAIRETKARHGFAFAE.

Gly-14 to Gly-19 provides a ligand contact to NAD(+).

Belongs to the 3-hydroxyacyl-CoA dehydrogenase family. L-carnitine dehydrogenase subfamily. In terms of assembly, homodimer.

It localises to the cytoplasm. The catalysed reaction is carnitine + NAD(+) = 3-dehydrocarnitine + NADH + H(+). Its pathway is amine and polyamine metabolism; carnitine metabolism. With respect to regulation, analogs of L-carnitine such as D-carnitine, glycine betaine and choline, are competitive inhibitors of L-carnitine oxidation. Functionally, catalyzes the NAD(+)-dependent oxidation of L-carnitine to 3-dehydrocarnitine. Is specific for L-carnitine and NAD(+) as substrates. D,L-3-hydroxybutyrate, L-lactate, ethanol, L-malate and D,L-isocitrate are not substrates. Is involved in a L-carnitine degradation pathway that allows P.aeruginosa to grow on L-carnitine as the sole source of carbon and nitrogen. The chain is L-carnitine dehydrogenase from Pseudomonas aeruginosa (strain ATCC 15692 / DSM 22644 / CIP 104116 / JCM 14847 / LMG 12228 / 1C / PRS 101 / PAO1).